Reading from the N-terminus, the 275-residue chain is Translation initiation factor 2 subunit alpha (275 aa).

In terms of domain architecture, S1 motif spans 12-83; that stretch reads GEFVIATVKS…NKGHIDLSLK (72 aa).

This sequence belongs to the eIF-2-alpha family. As to quaternary structure, heterotrimer composed of an alpha, a beta and a gamma chain.

In terms of biological role, eIF-2 functions in the early steps of protein synthesis by forming a ternary complex with GTP and initiator tRNA. The polypeptide is Translation initiation factor 2 subunit alpha (Thermococcus onnurineus (strain NA1)).